A 415-amino-acid polypeptide reads, in one-letter code: Serine/threonine transporter SstT (415 aa).

8 helical membrane passes run 23–43 (ILIG…AAIA), 47–67 (LGTL…LMLV), 85–105 (ILFL…LFSF), 144–164 (ALLN…GFAL), 181–201 (AVTF…FGLV), 220–240 (LLVL…LLVF), 293–313 (IPLG…VLTL), and 333–353 (VVAS…LLLI).

It belongs to the dicarboxylate/amino acid:cation symporter (DAACS) (TC 2.A.23) family.

It is found in the cell inner membrane. The enzyme catalyses L-serine(in) + Na(+)(in) = L-serine(out) + Na(+)(out). It catalyses the reaction L-threonine(in) + Na(+)(in) = L-threonine(out) + Na(+)(out). Its function is as follows. Involved in the import of serine and threonine into the cell, with the concomitant import of sodium (symport system). This is Serine/threonine transporter SstT from Klebsiella pneumoniae subsp. pneumoniae (strain ATCC 700721 / MGH 78578).